We begin with the raw amino-acid sequence, 408 residues long: Protein EcsB (408 aa).

Transmembrane regions (helical) follow at residues 30 to 50 (HLVI…SKWI), 53 to 73 (IPAH…VLTS), 111 to 131 (LFPL…VTPG), 134 to 154 (LVSY…NQVM), 180 to 200 (LVLY…YVIM), 284 to 304 (YLGI…YVSA), 308 to 328 (IAAV…LPLF), 351 to 371 (YFSL…VASA), and 374 to 394 (AGLT…FVVL).

It is found in the cell membrane. Presumed to form part of an ABC-transporter, it may form a transport channel. The protein is Protein EcsB (ecsB) of Bacillus subtilis (strain 168).